The primary structure comprises 180 residues: MWRQRRKWEGPSHPWQKQRLIIEKRLMKEYGLKNKRELWIAETIARKWRAYARYLNAKQAAGQDISEEKERFLTKLKKLGVLSENAELDDVLDLTVKDVLERRLQTMLVRKGLAKTMKQARQFIVHGHIMVNGEVVDAPSYLVKKEEEDKIEFVPFSPLANPEHPARKLEQKEETNEESA.

In terms of domain architecture, S4 RNA-binding spans 102–174 (RRLQTMLVRK…PARKLEQKEE (73 aa)). The tract at residues 154 to 180 (VPFSPLANPEHPARKLEQKEETNEESA) is disordered. Basic and acidic residues predominate over residues 164–174 (HPARKLEQKEE).

It belongs to the universal ribosomal protein uS4 family. As to quaternary structure, part of the 30S ribosomal subunit. Contacts protein S5. The interaction surface between S4 and S5 is involved in control of translational fidelity.

Functionally, one of the primary rRNA binding proteins, it binds directly to 16S rRNA where it nucleates assembly of the body of the 30S subunit. Its function is as follows. With S5 and S12 plays an important role in translational accuracy. The chain is Small ribosomal subunit protein uS4 from Nanoarchaeum equitans (strain Kin4-M).